A 327-amino-acid polypeptide reads, in one-letter code: Malate dehydrogenase (327 aa).

Residue Gly12–Cys18 coordinates NAD(+). Substrate-binding residues include Arg92 and Arg98. NAD(+) contacts are provided by residues Asn105, Gln112, and Thr129–Asn131. Substrate contacts are provided by Asn131 and Arg162. The active-site Proton acceptor is the His187.

The protein belongs to the LDH/MDH superfamily. MDH type 2 family.

It catalyses the reaction (S)-malate + NAD(+) = oxaloacetate + NADH + H(+). In terms of biological role, catalyzes the reversible oxidation of malate to oxaloacetate. In Cutibacterium acnes (strain DSM 16379 / KPA171202) (Propionibacterium acnes), this protein is Malate dehydrogenase.